The sequence spans 683 residues: MGDVSYIVDSLGLPPFSYQMSLLSFTEKGPQELLQLLSDVFSTISPKHQKVDVAKEVPDQTADRLIGFLKIIKYRPNVQDPLLFRQLVAAGDRETLYQILRWVVPQAQLLEKRAFVGYYLSFPDMPEEFNFDPDIMELKEEIKAMQQEFIELHKSSDAIKTLSKDTQALKNKIKSLEEEKERLGEKVERAKGAVDKLPDRSSYMEVCTNLRKQQDEEVNLSTAIQTQRALQEKAEASYHRAAARLRELQTSYQEGSAGKLLETLNEDVKNLRAQVNERYPKEVEKRQKRQAALSEALASGISTEMDLQRLQHQATALHNQITEIQERKVAQDKARQGDKAYLQLRQAQQMATVSARKKEELGAKQERLQEKKTALTAQLDKLNAEGGGSGAVFSEEEWRTKYESMKSKLPIYKKMKKELGDLEAEVFVLAHTEELLASQEGGLLEKVKRLEKQQGISGFTETAQHLEKVSEAKSQMDEEKGMTLIEISRTVEEINNAINQRKQQLAPQIKKLRSVRQDFAEFEAKYLEKKTAYDNVVATFEARTSALEGEVSGLKAEVSENETKYHMLHCQLHITDQNIKKVTSGPAAERLRDKYEAKVKEAEDSTKALRDRQREIKDTHSTGLSQIDIMNDMLRLLQLKLNLARGIAVDMSQYGGGGGAAGGANGGMAGQTYDTGSANVLQL.

A CH (calponin-homology)-like region region spans residues Met1–Phe122. 2 coiled-coil regions span residues Asp134–Gly387 and Ala587–Asp618.

Belongs to the IFT81 family. Component of the IFT complex B, the core composed of IFT25, IFT27, IFT46, IFT52, IFT74, IFT81 and IFT88 as well as associated subunits IFT20, IFT57, IFT80 and IFT172. Interacts with IFT81; the interaction is direct: within the IFT complex B, IFT74 and IFT81 mediate the transport of tubulin within the cilium. Interacts with tubulin; interaction is direct.

The protein resides in the cell projection. It is found in the cilium. Functionally, component of the intraflagellar transport (IFT) complex B: together with IFT74, forms a tubulin-binding module that specifically mediates transport of tubulin within the cilium. Binds tubulin via its CH (calponin-homology)-like region. Required for ciliogenesis. In Chlamydomonas reinhardtii (Chlamydomonas smithii), this protein is Intraflagellar transport protein 81 (IFT81).